The chain runs to 55 residues: UPF0391 membrane protein Neut_2351/Neut_2360 (55 aa).

2 consecutive transmembrane segments (helical) span residues 4–24 (LAVV…TGVA) and 28–48 (AEMA…FWVL).

Belongs to the UPF0391 family.

The protein localises to the cell membrane. This is UPF0391 membrane protein Neut_2351/Neut_2360 from Nitrosomonas eutropha (strain DSM 101675 / C91 / Nm57).